Reading from the N-terminus, the 321-residue chain is Tetraacyldisaccharide 4'-kinase (321 aa).

ATP is bound at residue 54–61; that stretch reads SVGGTGKT.

Belongs to the LpxK family.

It catalyses the reaction a lipid A disaccharide + ATP = a lipid IVA + ADP + H(+). It participates in glycolipid biosynthesis; lipid IV(A) biosynthesis; lipid IV(A) from (3R)-3-hydroxytetradecanoyl-[acyl-carrier-protein] and UDP-N-acetyl-alpha-D-glucosamine: step 6/6. In terms of biological role, transfers the gamma-phosphate of ATP to the 4'-position of a tetraacyldisaccharide 1-phosphate intermediate (termed DS-1-P) to form tetraacyldisaccharide 1,4'-bis-phosphate (lipid IVA). The polypeptide is Tetraacyldisaccharide 4'-kinase (Rickettsia typhi (strain ATCC VR-144 / Wilmington)).